Consider the following 504-residue polypeptide: Anaerobic nitric oxide reductase transcription regulator NorR (504 aa).

At D57 the chain carries 4-aspartylphosphate. One can recognise a Sigma-54 factor interaction domain in the interval 187–416; the sequence is MIGLSPGMTQ…LEHAIHRAVV (230 aa). Residues 215 to 222 and 278 to 287 contribute to the ATP site; these read GETGTGKE and ADNGTLFLDE. The segment at residues 479 to 498 is a DNA-binding region (H-T-H motif); it reads WAACARMLETDVANLHRLAK.

It functions in the pathway nitrogen metabolism; nitric oxide reduction. In terms of biological role, required for the expression of anaerobic nitric oxide (NO) reductase, acts as a transcriptional activator for at least the norVW operon. Activation also requires sigma-54. The protein is Anaerobic nitric oxide reductase transcription regulator NorR of Escherichia coli O81 (strain ED1a).